Consider the following 593-residue polypeptide: NADH-quinone oxidoreductase subunit C/D (593 aa).

An NADH dehydrogenase I subunit C region spans residues 1–184; it reads MTADNAIFIP…DPYSLTLAKQ (184 aa). The tract at residues 208 to 593 is NADH dehydrogenase I subunit D; it reads DYMFLNLGPN…IDFVMADVDR (386 aa).

The protein in the N-terminal section; belongs to the complex I 30 kDa subunit family. This sequence in the C-terminal section; belongs to the complex I 49 kDa subunit family. NDH-1 is composed of 13 different subunits. Subunits NuoB, CD, E, F, and G constitute the peripheral sector of the complex.

It is found in the cell inner membrane. The catalysed reaction is a quinone + NADH + 5 H(+)(in) = a quinol + NAD(+) + 4 H(+)(out). Functionally, NDH-1 shuttles electrons from NADH, via FMN and iron-sulfur (Fe-S) centers, to quinones in the respiratory chain. The immediate electron acceptor for the enzyme in this species is believed to be ubiquinone. Couples the redox reaction to proton translocation (for every two electrons transferred, four hydrogen ions are translocated across the cytoplasmic membrane), and thus conserves the redox energy in a proton gradient. The chain is NADH-quinone oxidoreductase subunit C/D from Pseudomonas putida (strain ATCC 47054 / DSM 6125 / CFBP 8728 / NCIMB 11950 / KT2440).